Reading from the N-terminus, the 456-residue chain is tRNA modification GTPase MnmE (456 aa).

(6S)-5-formyl-5,6,7,8-tetrahydrofolate is bound by residues arginine 24, glutamate 81, and lysine 120. Residues 216–379 (GMTVVIAGRP…LRDHLKACMG (164 aa)) form the TrmE-type G domain. Asparagine 226 contacts K(+). Residues 226–231 (NAGKSS), 245–251 (TAIAGTT), 270–273 (DTAG), and 335–338 (NKAD) each bind GTP. A Mg(2+)-binding site is contributed by serine 230. Threonine 245, isoleucine 247, and threonine 250 together coordinate K(+). Threonine 251 provides a ligand contact to Mg(2+). Lysine 456 contributes to the (6S)-5-formyl-5,6,7,8-tetrahydrofolate binding site.

This sequence belongs to the TRAFAC class TrmE-Era-EngA-EngB-Septin-like GTPase superfamily. TrmE GTPase family. Homodimer. Heterotetramer of two MnmE and two MnmG subunits. The cofactor is K(+).

The protein resides in the cytoplasm. In terms of biological role, exhibits a very high intrinsic GTPase hydrolysis rate. Involved in the addition of a carboxymethylaminomethyl (cmnm) group at the wobble position (U34) of certain tRNAs, forming tRNA-cmnm(5)s(2)U34. The sequence is that of tRNA modification GTPase MnmE from Pseudomonas putida (strain W619).